Consider the following 122-residue polypeptide: UPF0145 protein BamMC406_5002 (122 aa).

Belongs to the UPF0145 family.

In Burkholderia ambifaria (strain MC40-6), this protein is UPF0145 protein BamMC406_5002.